A 539-amino-acid polypeptide reads, in one-letter code: Phosphatidylinositol 4-phosphate 5-kinase type-1 beta (539 aa).

Positions 1–21 are disordered; the sequence is MSSTAENGDAVPGKQNEEKTY. The region spanning 25–395 is the PIPK domain; that stretch reads ASSAIKGAIQ…RFLKFMNSRV (371 aa). Ser445, Ser447, and Ser448 each carry phosphoserine.

As to quaternary structure, interacts with RAC1, AJUBA, PLD1, PLD2 and ARF1.

The protein localises to the cytoplasm. The protein resides in the cytosol. It is found in the cell membrane. Its subcellular location is the endomembrane system. It carries out the reaction a 1,2-diacyl-sn-glycero-3-phospho-(1D-myo-inositol 4-phosphate) + ATP = a 1,2-diacyl-sn-glycero-3-phospho-(1D-myo-inositol-4,5-bisphosphate) + ADP + H(+). The enzyme catalyses 1-octadecanoyl-2-(5Z,8Z,11Z,14Z)-eicosatetraenoyl-sn-glycero-3-phospho-1D-myo-inositol 4-phosphate + ATP = 1-octadecanoyl-2-(5Z,8Z,11Z,14Z)-eicosatetraenoyl-sn-glycero-3-phospho-1D-myo-inositol 4,5-bisphosphate + ADP + H(+). It catalyses the reaction 1-octadecanoyl-2-(9Z)-octadecenoyl-sn-glycero-3-phospho-1D-myo-inositol 4-phosphate + ATP = 1-octadecanoyl-2-(9Z)-octadecenoyl-sn-glycero-3-phospho-1D-myo-inositol 4,5-bisphosphate + ADP + H(+). The catalysed reaction is 1-octadecanoyl-2-(9Z)-octadecenoyl-sn-glycero-3-phospho-1D-myo-inositol + ATP = 1-octadecanoyl-2-(9Z)-octadecenoyl-sn-glycero-3-phospho-1D-myo-inositol 5-phosphate + ADP + H(+). It carries out the reaction 1-octadecanoyl-2-(9Z,12Z)-octadecadienoyl-sn-glycero-3-phospho-1D-myo-inositol + ATP = 1-octadecanoyl-2-(9Z,12Z)-octadecadienoyl-sn-glycero-3-phospho-1D-myo-inositol 5-phosphate + ADP + H(+). The enzyme catalyses 1-octadecanoyl-2-(5Z,8Z,11Z,14Z-eicosatetraenoyl)-sn-glycero-3-phospho-(1D-myo-inositol) + ATP = 1-octadecanoyl-2-(5Z,8Z,11Z,14Z)-eicosatetraenoyl-sn-glycero-3-phospho-1D-myo-inositol 5-phosphate + ADP + H(+). It catalyses the reaction 1,2-di-(9Z,12Z)-octadecadienoyl-sn-glycero-3-phospho-1D-myo-inositol + ATP = 1,2-di(9Z,12Z)-octadecadienoyl-sn-glycero-3-phospho-1D-myo-inositol 5-phosphate + ADP + H(+). Functionally, catalyzes the phosphorylation of phosphatidylinositol 4-phosphate (PtdIns(4)P/PI4P) to form phosphatidylinositol 4,5-bisphosphate (PtdIns(4,5)P2/PIP2), a lipid second messenger that regulates several cellular processes such as signal transduction, vesicle trafficking, actin cytoskeleton dynamics, cell adhesion, and cell motility. PtdIns(4,5)P2 can directly act as a second messenger or can be utilized as a precursor to generate other second messengers: inositol 1,4,5-trisphosphate (IP3), diacylglycerol (DAG) or phosphatidylinositol-3,4,5-trisphosphate (PtdIns(3,4,5)P3/PIP3). Mediates RAC1-dependent reorganization of actin filaments. Contributes to the activation of phospholipase PLD2. Together with PIP5K1A, is required, after stimulation by G-protein coupled receptors, for the synthesis of IP3 that will induce stable platelet adhesion. This is Phosphatidylinositol 4-phosphate 5-kinase type-1 beta from Rattus norvegicus (Rat).